The primary structure comprises 861 residues: Bifunctional uridylyltransferase/uridylyl-removing enzyme (861 aa).

The uridylyltransferase stretch occupies residues 1–321 (MKNDNRIIKN…VYHQKQKIIR (321 aa)). The interval 322–678 (LDDEFQLSNR…IMPHHSQGGT (357 aa)) is uridylyl-removing. The HD domain maps to 440 to 562 (VDQHTLFVIR…LPHARYLDYL (123 aa)). ACT domains are found at residues 679–760 (EVFI…AVSR) and 788–861 (QLFL…KSKY).

It belongs to the GlnD family. Requires Mg(2+) as cofactor.

The catalysed reaction is [protein-PII]-L-tyrosine + UTP = [protein-PII]-uridylyl-L-tyrosine + diphosphate. It catalyses the reaction [protein-PII]-uridylyl-L-tyrosine + H2O = [protein-PII]-L-tyrosine + UMP + H(+). Uridylyltransferase (UTase) activity is inhibited by glutamine, while glutamine activates uridylyl-removing (UR) activity. In terms of biological role, modifies, by uridylylation and deuridylylation, the PII regulatory proteins (GlnB and homologs), in response to the nitrogen status of the cell that GlnD senses through the glutamine level. Under low glutamine levels, catalyzes the conversion of the PII proteins and UTP to PII-UMP and PPi, while under higher glutamine levels, GlnD hydrolyzes PII-UMP to PII and UMP (deuridylylation). Thus, controls uridylylation state and activity of the PII proteins, and plays an important role in the regulation of nitrogen assimilation and metabolism. This chain is Bifunctional uridylyltransferase/uridylyl-removing enzyme, found in Legionella pneumophila (strain Paris).